Reading from the N-terminus, the 941-residue chain is UvrABC system protein A (941 aa).

37-44 is an ATP binding site; that stretch reads GLSGSGKS. The segment at 260 to 287 adopts a C4-type zinc-finger fold; that stretch reads CFKCKMSFEELEPLSFSFNSPKGACESC. ABC transporter domains follow at residues 316-585 and 605-937; these read IFGY…NNHS and KEKH…KFLA. 637 to 644 is an ATP binding site; sequence GVSGSGKS. The C4-type zinc finger occupies 737–763; that stretch reads CEKCQGDGDIKIEMHFLPDVLVQCDSC.

The protein belongs to the ABC transporter superfamily. UvrA family. As to quaternary structure, forms a heterotetramer with UvrB during the search for lesions.

It is found in the cytoplasm. Its function is as follows. The UvrABC repair system catalyzes the recognition and processing of DNA lesions. UvrA is an ATPase and a DNA-binding protein. A damage recognition complex composed of 2 UvrA and 2 UvrB subunits scans DNA for abnormalities. When the presence of a lesion has been verified by UvrB, the UvrA molecules dissociate. In Helicobacter pylori (strain J99 / ATCC 700824) (Campylobacter pylori J99), this protein is UvrABC system protein A.